Reading from the N-terminus, the 212-residue chain is Peptide methionine sulfoxide reductase MsrA (212 aa).

Residues 1–14 (MSSIDKTQRITQSD) show a composition bias toward polar residues. The interval 1-21 (MSSIDKTQRITQSDALPGRST) is disordered. C52 is an active-site residue.

The protein belongs to the MsrA Met sulfoxide reductase family.

It catalyses the reaction L-methionyl-[protein] + [thioredoxin]-disulfide + H2O = L-methionyl-(S)-S-oxide-[protein] + [thioredoxin]-dithiol. The enzyme catalyses [thioredoxin]-disulfide + L-methionine + H2O = L-methionine (S)-S-oxide + [thioredoxin]-dithiol. Functionally, has an important function as a repair enzyme for proteins that have been inactivated by oxidation. Catalyzes the reversible oxidation-reduction of methionine sulfoxide in proteins to methionine. In Pectobacterium carotovorum subsp. carotovorum (strain PC1), this protein is Peptide methionine sulfoxide reductase MsrA.